We begin with the raw amino-acid sequence, 85 residues long: Cytochrome c2 (85 aa).

Heme c is bound by residues Cys-12, Cys-15, His-16, and Met-61.

This sequence belongs to the cytochrome c family. In terms of processing, binds 1 heme c group covalently per subunit.

Cytochrome c2 is found mainly in purple, non-sulfur, photosynthetic bacteria where it functions as the electron donor to the oxidized bacteriochlorophyll in the photophosphorylation pathway. However, it may also have a role in the respiratory chain and is found in some non-photosynthetic bacteria. This is Cytochrome c2 from Rubrivivax gelatinosus (Rhodocyclus gelatinosus).